We begin with the raw amino-acid sequence, 99 residues long: MALALSDVKRIAHLARIEISDDEAAQTLAQLNNFFSLVEQMQAVDTSGIEPLAHPLSAVRDMVQRLREDVVTESDRRADYQRPAPATEDGLYLVPKVIE.

This sequence belongs to the GatC family. In terms of assembly, heterotrimer of A, B and C subunits.

The enzyme catalyses L-glutamyl-tRNA(Gln) + L-glutamine + ATP + H2O = L-glutaminyl-tRNA(Gln) + L-glutamate + ADP + phosphate + H(+). It carries out the reaction L-aspartyl-tRNA(Asn) + L-glutamine + ATP + H2O = L-asparaginyl-tRNA(Asn) + L-glutamate + ADP + phosphate + 2 H(+). In terms of biological role, allows the formation of correctly charged Asn-tRNA(Asn) or Gln-tRNA(Gln) through the transamidation of misacylated Asp-tRNA(Asn) or Glu-tRNA(Gln) in organisms which lack either or both of asparaginyl-tRNA or glutaminyl-tRNA synthetases. The reaction takes place in the presence of glutamine and ATP through an activated phospho-Asp-tRNA(Asn) or phospho-Glu-tRNA(Gln). This is Aspartyl/glutamyl-tRNA(Asn/Gln) amidotransferase subunit C from Cupriavidus necator (strain ATCC 17699 / DSM 428 / KCTC 22496 / NCIMB 10442 / H16 / Stanier 337) (Ralstonia eutropha).